We begin with the raw amino-acid sequence, 917 residues long: Translation initiation factor IF-2 (917 aa).

The interval 241 to 312 (EEAKKGTLHK…GGWRSGGGRK (72 aa)) is disordered. A compositionally biased stretch (basic and acidic residues) spans 252 to 262 (AKAEGAEDKKK). Positions 274-283 (SSETSSTWQE) are enriched in polar residues. A compositionally biased stretch (gly residues) spans 298-308 (TSGGVGGWRSG). The 168-residue stretch at 415 to 582 (PRPPVVTVMG…NVLLQAEILE (168 aa)) folds into the tr-type G domain. The interval 424 to 431 (GHVDHGKT) is G1. A GTP-binding site is contributed by 424 to 431 (GHVDHGKT). The G2 stretch occupies residues 449-453 (GITQH). Residues 470 to 473 (DTPG) are G3. Residues 470 to 474 (DTPGH) and 524 to 527 (NKID) contribute to the GTP site. The interval 524-527 (NKID) is G4. Positions 560–562 (SAK) are G5.

This sequence belongs to the TRAFAC class translation factor GTPase superfamily. Classic translation factor GTPase family. IF-2 subfamily.

It is found in the cytoplasm. Its function is as follows. One of the essential components for the initiation of protein synthesis. Protects formylmethionyl-tRNA from spontaneous hydrolysis and promotes its binding to the 30S ribosomal subunits. Also involved in the hydrolysis of GTP during the formation of the 70S ribosomal complex. This is Translation initiation factor IF-2 from Polynucleobacter necessarius subsp. necessarius (strain STIR1).